A 68-amino-acid polypeptide reads, in one-letter code: Protein SlyX homolog (68 aa).

It belongs to the SlyX family.

In Ectopseudomonas mendocina (strain ymp) (Pseudomonas mendocina), this protein is Protein SlyX homolog.